The sequence spans 220 residues: MKKADNEHLARMRVEYGSVEKDGSADLDVDWLADGWVALLRRWLADAEAAGIAEPNAIVLGTVDAGGRPVTRTVLCKSVDDTGITFFTNYGSAKGEDLASTPYASATFPWFALGRQVHVRGPVTKVSAEETADYWSKRPRGSQLGAWASQQSRPIASRAELLDQLAEVTERFADHDTVPVPPDWGGYRITAEVVEFWQGRESRVHNRIRVHDGRIERLQP.

Substrate contacts are provided by residues 13-16 and Lys-77; that span reads RVEY. Residues 72 to 77, 87 to 88, Lys-94, and Gln-116 each bind FMN; these read RTVLCK and FT. Residues Tyr-134, Arg-138, and Ser-142 each contribute to the substrate site. FMN contacts are provided by residues 151–152 and Trp-197; that span reads QS. Position 203–205 (203–205) interacts with substrate; that stretch reads RVH. Residue Arg-207 coordinates FMN.

The protein belongs to the pyridoxamine 5'-phosphate oxidase family. Homodimer. FMN serves as cofactor.

It carries out the reaction pyridoxamine 5'-phosphate + O2 + H2O = pyridoxal 5'-phosphate + H2O2 + NH4(+). It catalyses the reaction pyridoxine 5'-phosphate + O2 = pyridoxal 5'-phosphate + H2O2. Its pathway is cofactor metabolism; pyridoxal 5'-phosphate salvage; pyridoxal 5'-phosphate from pyridoxamine 5'-phosphate: step 1/1. It functions in the pathway cofactor metabolism; pyridoxal 5'-phosphate salvage; pyridoxal 5'-phosphate from pyridoxine 5'-phosphate: step 1/1. Its function is as follows. Catalyzes the oxidation of either pyridoxine 5'-phosphate (PNP) or pyridoxamine 5'-phosphate (PMP) into pyridoxal 5'-phosphate (PLP). This chain is Pyridoxine/pyridoxamine 5'-phosphate oxidase, found in Mycobacterium sp. (strain KMS).